The chain runs to 622 residues: Probable E3 ubiquitin-protein ligase DTX2 (622 aa).

WWE domains are found at residues 8–97 (SLVQ…AVRR) and 98–174 (HLFP…SVRR). Asymmetric dimethylarginine is present on residues arginine 213, arginine 215, and arginine 233. Lysine 249 is subject to N6-acetyllysine. Disordered stretches follow at residues 249-324 (KPSL…VPMQ) and 355-393 (APQP…EPEP). Arginine 256 carries the omega-N-methylarginine modification. Residues 274–285 (LGSQPLYRSSLS) show a composition bias toward polar residues. Residues 299 to 322 (SGAVSASLPSGPSSSPGSVPATVP) show a composition bias toward low complexity. Serine 360 bears the Phosphoserine mark. Over residues 372–381 (GSVKRLRKMS) the composition is skewed to basic residues. The RING-type zinc-finger motif lies at 412–473 (CIICMEKLST…DGSLQCPSCK (62 aa)).

The protein belongs to the Deltex family. In terms of assembly, homodimer. May form a heterodimer with other members of the Deltex family. Interacts with NOTCH1.

It localises to the cytoplasm. The protein localises to the nucleus. It carries out the reaction S-ubiquitinyl-[E2 ubiquitin-conjugating enzyme]-L-cysteine + [acceptor protein]-L-lysine = [E2 ubiquitin-conjugating enzyme]-L-cysteine + N(6)-ubiquitinyl-[acceptor protein]-L-lysine.. The protein operates within protein modification; protein ubiquitination. Functionally, regulator of Notch signaling, a signaling pathway involved in cell-cell communications that regulates a broad spectrum of cell-fate determinations. Probably acts both as a positive and negative regulator of Notch, depending on the developmental and cell context. Mediates the antineural activity of Notch, possibly by inhibiting the transcriptional activation mediated by MATCH1. Functions as a ubiquitin ligase protein in vitro, suggesting that it may regulate the Notch pathway via some ubiquitin ligase activity. This chain is Probable E3 ubiquitin-protein ligase DTX2 (DTX2), found in Homo sapiens (Human).